Here is a 600-residue protein sequence, read N- to C-terminus: Long-chain-fatty-acid--CoA ligase FadD15 (600 aa).

The protein belongs to the ATP-dependent AMP-binding enzyme family.

The enzyme catalyses a long-chain fatty acid + ATP + CoA = a long-chain fatty acyl-CoA + AMP + diphosphate. The protein operates within lipid metabolism; fatty acid biosynthesis. Functionally, catalyzes the activation of long-chain fatty acids as acyl-coenzyme A (acyl-CoA), which are then transferred to the multifunctional polyketide synthase (PKS) type III for further chain extension. This is Long-chain-fatty-acid--CoA ligase FadD15 (fadD15) from Mycobacterium bovis (strain ATCC BAA-935 / AF2122/97).